The primary structure comprises 309 residues: MEFTPLAFESLGVRSQATLVETKDVRILIDPAVSLAPRRFGLPPHQIEVDRLTELAKKIYEEAKIADIIIITHYHYDHHDPGYVIPLDIYQNKTVYIKDPQNFINPSQKFRRAPRFIKTITGKPKTMESADGKVVKYGSTTIQFSKAVPHGADERLGYVIQVAINDKDSTILFTSDIEGAPKNSHIDFIKSVRPNFLIIDGPLSYLLGRALSQDELDTEIKNMEEVVRNGLQYAIIDHHVLRDPNYESVLKPVKEVANSVGCKVISASEYLREPPQLLEAKRRELFQRDNRPAKIPRGLAKLLSAGEGG.

The protein belongs to the UPF0282 family.

The polypeptide is UPF0282 protein Saci_0277 (Sulfolobus acidocaldarius (strain ATCC 33909 / DSM 639 / JCM 8929 / NBRC 15157 / NCIMB 11770)).